Reading from the N-terminus, the 29-residue chain is GLPVCGETCFGGTCNTPGCSCTDPICTRD.

The segment at residues 1–29 is a cross-link (cyclopeptide (Gly-Asp)); that stretch reads GLPVCGETCFGGTCNTPGCSCTDPICTRD. Intrachain disulfides connect Cys-5-Cys-19, Cys-9-Cys-21, and Cys-14-Cys-26.

Post-translationally, this is a cyclic peptide.

In terms of biological role, probably participates in a plant defense mechanism. The chain is Kalata-B11 from Oldenlandia affinis.